The primary structure comprises 474 residues: ATP synthase subunit beta 2 (474 aa).

ATP is bound at residue 157–164 (GGAGVGKT).

Belongs to the ATPase alpha/beta chains family. As to quaternary structure, F-type ATPases have 2 components, CF(1) - the catalytic core - and CF(0) - the membrane proton channel. CF(1) has five subunits: alpha(3), beta(3), gamma(1), delta(1), epsilon(1). CF(0) has three main subunits: a(1), b(2) and c(9-12). The alpha and beta chains form an alternating ring which encloses part of the gamma chain. CF(1) is attached to CF(0) by a central stalk formed by the gamma and epsilon chains, while a peripheral stalk is formed by the delta and b chains.

It localises to the cell inner membrane. It catalyses the reaction ATP + H2O + 4 H(+)(in) = ADP + phosphate + 5 H(+)(out). Functionally, produces ATP from ADP in the presence of a proton gradient across the membrane. The catalytic sites are hosted primarily by the beta subunits. The sequence is that of ATP synthase subunit beta 2 from Polaromonas naphthalenivorans (strain CJ2).